Reading from the N-terminus, the 431-residue chain is Elongation factor 1-gamma (431 aa).

The region spanning 2–84 (VKGTLYTYPE…LLANEQLRGG (83 aa)) is the GST N-terminal domain. A GST C-terminal domain is found at 86-212 (CPFVQAQVQQ…YKLCEKALVF (127 aa)). The disordered stretch occupies residues 223–261 (KTGAAKPQQQAQQQKQEKKPKEKKEAPKKAAEPAEELDA). Positions 226-236 (AAKPQQQAQQQ) are enriched in low complexity. The span at 237–254 (KQEKKPKEKKEAPKKAAE) shows a compositional bias: basic and acidic residues. Residues 272–431 (SKDPFDALPK…RKFNQGKIFK (160 aa)) enclose the EF-1-gamma C-terminal domain. At S294 the chain carries Phosphoserine.

Interacts with microtubules. May interact with BicDR; the interaction is probably indirect. Interacts (via C-terminus) with Doa; the interaction is probably direct, is transient and leads to phosphorylation of eEF1gamma by Doa. EF-1 is composed of four subunits: alpha, beta, delta, and gamma. Post-translationally, phosphorylated on Ser-294 by LAMMER kinases, including Doa. Phosphorylation on Ser-294 by Doa is required for negative regulation of microtubule-based transport.

It localises to the cytoplasm. It is found in the nucleus. The protein localises to the cytoskeleton. Microtubule binding protein involved in regulation of microtubule-based transport. Probably plays a role in anchoring the EF-1 complex to other cellular components. Probably involved in formation and/or development of mechanosensory organs during metamorphosis. Required for cellular and organismal viability. Not essential for the innate immune response to bacterial infection. The sequence is that of Elongation factor 1-gamma from Drosophila melanogaster (Fruit fly).